A 644-amino-acid chain; its full sequence is Complement component C1q receptor (644 aa).

Residues 1-22 (MAISTGLFLLLGLLGQPWAGAA) form the signal peptide. At 23-572 (ADSQAVVCEG…SAHSDTDGQN (550 aa)) the chain is on the extracellular side. The C-type lectin domain maps to 31-173 (EGTACYTAHW…CGTPEAPGNS (143 aa)). An N-linked (GlcNAc...) asparagine glycan is attached at asparagine 102. Disulfide bonds link cysteine 140/cysteine 164, cysteine 261/cysteine 272, cysteine 268/cysteine 282, cysteine 284/cysteine 297, cysteine 303/cysteine 314, cysteine 308/cysteine 325, cysteine 327/cysteine 340, cysteine 346/cysteine 355, cysteine 351/cysteine 364, cysteine 366/cysteine 380, cysteine 386/cysteine 397, cysteine 393/cysteine 406, cysteine 408/cysteine 422, cysteine 428/cysteine 440, cysteine 436/cysteine 449, and cysteine 451/cysteine 464. 2 EGF-like domains span residues 257-298 (PKFG…VTCA) and 299-341 (SRNP…VHCV). The N-linked (GlcNAc...) asparagine glycan is linked to asparagine 322. Residues 342 to 381 (DIDECQDSPCAQDCVNTLGSFHCECWVGYQPSGPKEEACE) enclose the EGF-like 3; calcium-binding domain. The 42-residue stretch at 382–423 (DVDECAAANSPCAQGCINTDGSFYCSCKEGYIVSGEDSTQCE) folds into the EGF-like 4; calcium-binding domain. The 42-residue stretch at 424–465 (DIDECSDARGNPCDSLCFNTDGSFRCGCPPGWELAPNGVFCS) folds into the EGF-like 5; calcium-binding domain. Positions 473 to 508 (LPARPPQKEDNDDRKESTMPPTEMPSSPSGSKDVSN) are disordered. The segment covering 478–489 (PQKEDNDDRKES) has biased composition (basic and acidic residues). A compositionally biased stretch (low complexity) spans 490–501 (TMPPTEMPSSPS). Residues 573–593 (LLLFYILGTVVAISLLLVLAL) traverse the membrane as a helical segment. Over 594 to 644 (GILIYHKRRAKKEEIKEKKPQNAADSYSWVPERAESQAPENQYSPTPGTDC) the chain is Cytoplasmic. Residues 605–644 (KEEIKEKKPQNAADSYSWVPERAESQAPENQYSPTPGTDC) are disordered. Phosphoserine is present on serine 619. A phosphotyrosine mark is found at tyrosine 620 and tyrosine 636. Residues 631-644 (APENQYSPTPGTDC) show a composition bias toward polar residues.

As to quaternary structure, homodimer. Interacts with C1QBP; the association may represent a cell surface C1q receptor. Interacts with surfactant protein A/SFTPA1. Interacts with multimerin-2/MMRN2. Interacts with DAG1; this interaction plays an important role in endothelial cell migration. Interacts with CBL. Interacts with IGFBP7. Interacts with VEGFR2. In terms of processing, N- and O-glycosylated. Post-translationally, phosphorylated on Tyr-620 and Tyr-636 by SRC; these phosphorylations promote endothelial cell adhesion and migration. As to expression, expressed in lung, heart and bone marrow. Expressed at lower level in ovary, whole embryo and fetal liver. Not detected in brain, adult liver or thymus. Highly expressed in peritoneal cavity and bone marrow macrophages. Not detected in epithelial cells.

It localises to the cell membrane. In terms of biological role, cell surface receptor that plays a role in various physiological processes including inflammation, phagocytosis, and cell adhesion. Plays a role in phagocytosis and enhances the uptake of apoptotic cells and immune complexes by acting as a receptor for defense collagens including surfactant protein A/SFTPA1, C1q, and mannose-binding lectin (MBL2). Plays a role in the regulation of endothelial cell function and adhesion by activating angiogenesis. Mechanistically, exerts its angiogenic function by associating with beta-dystroglycan, leading to SRC-dependent phosphorylation and subsequent recruitment of CBL. In turn, CBL provides a docking site for downstream signaling components, such as CRKL to enhance cell migration. Participates in angiogenesis also by acting as a receptor for the ECM pan-endothelial glycoprotein multimerin-2/MMRN2 and IGFBP7 ligands. Both ligands play a non-redundant role in CD93-mediated endothelial cell function. Acts as a key regulator of endothelial barrier function through modulating VEGFR2 function. In Mus musculus (Mouse), this protein is Complement component C1q receptor (Cd93).